Consider the following 196-residue polypeptide: Probable GTP-binding protein EngB (196 aa).

Positions 22–196 (NLPEIALSGR…GNWIEEKISK (175 aa)) constitute an EngB-type G domain. Residues 30 to 37 (GRSNVGKS), 57 to 61 (GKTQT), 75 to 78 (DVPG), 142 to 145 (TKID), and 175 to 177 (FSS) contribute to the GTP site. Positions 37 and 59 each coordinate Mg(2+).

This sequence belongs to the TRAFAC class TrmE-Era-EngA-EngB-Septin-like GTPase superfamily. EngB GTPase family. Mg(2+) is required as a cofactor.

Functionally, necessary for normal cell division and for the maintenance of normal septation. The chain is Probable GTP-binding protein EngB from Lactobacillus helveticus (strain DPC 4571).